Here is a 146-residue protein sequence, read N- to C-terminus: Anti-sigma F factor (146 aa).

This sequence belongs to the anti-sigma-factor family.

The enzyme catalyses L-seryl-[protein] + ATP = O-phospho-L-seryl-[protein] + ADP + H(+). It carries out the reaction L-threonyl-[protein] + ATP = O-phospho-L-threonyl-[protein] + ADP + H(+). Binds to sigma F and blocks its ability to form an RNA polymerase holoenzyme (E-sigma F). Phosphorylates SpoIIAA on a serine residue. This phosphorylation may enable SpoIIAA to act as an anti-anti-sigma factor that counteracts SpoIIAB and thus releases sigma F from inhibition. In Bacillus licheniformis (strain ATCC 14580 / DSM 13 / JCM 2505 / CCUG 7422 / NBRC 12200 / NCIMB 9375 / NCTC 10341 / NRRL NRS-1264 / Gibson 46), this protein is Anti-sigma F factor.